The sequence spans 280 residues: Bifunctional protein FolD (280 aa).

NADP(+) is bound by residues Gly-166 to Ser-168 and Ser-191.

The protein belongs to the tetrahydrofolate dehydrogenase/cyclohydrolase family. In terms of assembly, homodimer.

The catalysed reaction is (6R)-5,10-methylene-5,6,7,8-tetrahydrofolate + NADP(+) = (6R)-5,10-methenyltetrahydrofolate + NADPH. It carries out the reaction (6R)-5,10-methenyltetrahydrofolate + H2O = (6R)-10-formyltetrahydrofolate + H(+). The protein operates within one-carbon metabolism; tetrahydrofolate interconversion. In terms of biological role, catalyzes the oxidation of 5,10-methylenetetrahydrofolate to 5,10-methenyltetrahydrofolate and then the hydrolysis of 5,10-methenyltetrahydrofolate to 10-formyltetrahydrofolate. The polypeptide is Bifunctional protein FolD (Teredinibacter turnerae (strain ATCC 39867 / T7901)).